The primary structure comprises 575 residues: Urease subunit alpha (575 aa).

The Urease domain occupies 137-575; that stretch reads GGIDCHIHFI…LPMTQRYFLF (439 aa). Ni(2+) is bound by residues histidine 142, histidine 144, and lysine 225. The residue at position 225 (lysine 225) is an N6-carboxylysine. Histidine 227 serves as a coordination point for substrate. Positions 254 and 280 each coordinate Ni(2+). Catalysis depends on histidine 328, which acts as the Proton donor. Aspartate 368 is a Ni(2+) binding site.

The protein belongs to the metallo-dependent hydrolases superfamily. Urease alpha subunit family. Heterotrimer of UreA (gamma), UreB (beta) and UreC (alpha) subunits. Three heterotrimers associate to form the active enzyme. Requires Ni cation as cofactor. Carboxylation allows a single lysine to coordinate two nickel ions.

The protein resides in the cytoplasm. The enzyme catalyses urea + 2 H2O + H(+) = hydrogencarbonate + 2 NH4(+). The protein operates within nitrogen metabolism; urea degradation; CO(2) and NH(3) from urea (urease route): step 1/1. The sequence is that of Urease subunit alpha from Methylibium petroleiphilum (strain ATCC BAA-1232 / LMG 22953 / PM1).